The sequence spans 275 residues: Phosphonoacetaldehyde hydrolase (275 aa).

Asp-15 acts as the Nucleophile in catalysis. Residues Asp-15 and Ala-17 each contribute to the Mg(2+) site. Lys-56 serves as the catalytic Schiff-base intermediate with substrate. Asp-189 contacts Mg(2+).

The protein belongs to the HAD-like hydrolase superfamily. PhnX family. As to quaternary structure, homodimer. It depends on Mg(2+) as a cofactor.

The enzyme catalyses phosphonoacetaldehyde + H2O = acetaldehyde + phosphate + H(+). Its function is as follows. Involved in phosphonate degradation. The chain is Phosphonoacetaldehyde hydrolase from Pseudomonas fluorescens (strain Pf0-1).